We begin with the raw amino-acid sequence, 150 residues long: Large ribosomal subunit protein uL13 (150 aa).

The disordered stretch occupies residues 129 to 150 (AEHPHAAQQPKPLQLDPAATAQ).

The protein belongs to the universal ribosomal protein uL13 family. In terms of assembly, part of the 50S ribosomal subunit.

This protein is one of the early assembly proteins of the 50S ribosomal subunit, although it is not seen to bind rRNA by itself. It is important during the early stages of 50S assembly. The sequence is that of Large ribosomal subunit protein uL13 from Synechococcus sp. (strain WH7803).